We begin with the raw amino-acid sequence, 499 residues long: Lysine--tRNA ligase (499 aa).

Mg(2+) is bound by residues glutamate 408 and glutamate 415.

Belongs to the class-II aminoacyl-tRNA synthetase family. Homodimer. Mg(2+) serves as cofactor.

Its subcellular location is the cytoplasm. It catalyses the reaction tRNA(Lys) + L-lysine + ATP = L-lysyl-tRNA(Lys) + AMP + diphosphate. This Bacillus thuringiensis (strain Al Hakam) protein is Lysine--tRNA ligase.